The primary structure comprises 901 residues: Probable inorganic carbon transporter subunit DabA (901 aa).

4 residues coordinate Zn(2+): C424, D426, H606, and C621.

Belongs to the inorganic carbon transporter (TC 9.A.2) DabA family. As to quaternary structure, forms a complex with DabB. The cofactor is Zn(2+).

It localises to the cell membrane. Functionally, part of an energy-coupled inorganic carbon pump. In Staphylococcus aureus (strain MSSA476), this protein is Probable inorganic carbon transporter subunit DabA.